The chain runs to 111 residues: Mitochondrial import inner membrane translocase subunit Tim10B (111 aa).

The short motif at 24 to 48 (CFNACARDYTTSTLTKDEGSCVSQC) is the Twin CX3C motif element. 2 disulfide bridges follow: cysteine 24–cysteine 48 and cysteine 28–cysteine 44. The segment at 73 to 111 (KQGEQSPTEAIKSAKPEPAVPAPEATPVETTPVIEENKQ) is disordered. The segment covering 94–105 (APEATPVETTPV) has biased composition (low complexity).

It belongs to the small Tim family. As to quaternary structure, component of the TIM22 complex, whose core is composed of tim-22, associated with peripheral protein tin-9.2/tim-10b and the 70 kDa heterohexamer. In most cases, the 70 kDa complex is composed of TIMM9 and TIMM10.

Its subcellular location is the mitochondrion inner membrane. Component of the TIM22 complex, a complex that mediates the import and insertion of multi-pass transmembrane proteins into the mitochondrial inner membrane. The TIM22 complex forms a twin-pore translocase that uses the membrane potential as the external driving force. In the TIM22 complex, it may act as a docking point for the soluble 70 kDa complex that guides the target proteins in transit through the aqueous mitochondrial intermembrane space. The protein is Mitochondrial import inner membrane translocase subunit Tim10B (tin-9.2) of Caenorhabditis elegans.